The sequence spans 110 residues: RNA silencing suppressor (110 aa).

The tract at residues 50-53 is basic; the sequence is RRRR. The segment at 60–81 adopts a C4-type zinc-finger fold; it reads CERCYRVYPPLPFSKKCDNRTC.

The protein belongs to the carlaviruses nucleic acid-binding protein family.

Suppressor of viral-induced RNA silencing. The potential mechanism of action is based on sequestering siRNAs. This is RNA silencing suppressor from Helenium virus S (HelVS).